The sequence spans 184 residues: UPF0149 protein PSPA7_5968 (184 aa).

It belongs to the UPF0149 family.

The chain is UPF0149 protein PSPA7_5968 from Pseudomonas paraeruginosa (strain DSM 24068 / PA7) (Pseudomonas aeruginosa (strain PA7)).